The chain runs to 313 residues: Testis-expressed protein 264 (313 aa).

Residues 1–6 lie on the Lumenal side of the membrane; sequence MSDLLL. Residues 7–31 traverse the membrane as a helical; Signal-anchor for type III membrane protein segment; the sequence is LGLIGGLTLLLLLTLLAFAGYSGLL. The Cytoplasmic portion of the chain corresponds to 32–313; it reads AGVEVSAGSP…EPTAPEKGKE (282 aa). The tract at residues 193 to 313 is disordered; the sequence is PEMKETEWKW…EPTAPEKGKE (121 aa). Over residues 219–247 the composition is skewed to polar residues; it reads DTMSDTSSVSLEVSPGSRETSAATLSPGA. A phosphoserine mark is found at Ser239 and Ser244. Basic and acidic residues predominate over residues 251–263; it reads GWDDGDTRSEHSY. Residues 264 to 273 show a composition bias toward low complexity; sequence SESGASGSSF. The LIR motif motif lies at 273–276; that stretch reads FEEL.

As to quaternary structure, interacts (via the LIR motif) with ATG8 family proteins MAP1LC3A, MAP1LC3B, GABARAP and GABARAPL1. Interacts with VCP/p97; bridging VCP/p97 to covalent DNA-protein cross-links (DPCs). Interacts with TOP1 (when sumoylated).

Its subcellular location is the endoplasmic reticulum membrane. The protein localises to the cytoplasmic vesicle. It localises to the autophagosome. It is found in the cytoplasm. The protein resides in the cytosol. Its subcellular location is the nucleus. The protein localises to the chromosome. Its function is as follows. Major reticulophagy (also called ER-phagy) receptor that acts independently of other candidate reticulophagy receptors to remodel subdomains of the endoplasmic reticulum into autophagosomes upon nutrient stress, which then fuse with lysosomes for endoplasmic reticulum turnover. The ATG8-containing isolation membrane (IM) cradles a tubular segment of TEX264-positive ER near a three-way junction, allowing the formation of a synapse of 2 juxtaposed membranes with trans interaction between the TEX264 and ATG8 proteins. Expansion of the IM would extend the capture of ER, possibly through a 'zipper-like' process involving continued trans TEX264-ATG8 interactions, until poorly understood mechanisms lead to the fission of relevant membranes and, ultimately, autophagosomal membrane closure. Also involved in the repair of covalent DNA-protein cross-links (DPCs) during DNA synthesis: acts by bridging VCP/p97 to covalent DNA-protein cross-links (DPCs) and initiating resolution of DPCs by SPRTN. In Homo sapiens (Human), this protein is Testis-expressed protein 264.